We begin with the raw amino-acid sequence, 215 residues long: MTQCSAFSGIFFRNWIFIRGVPTIQFLPPEGPPEIAFAGRSNVGKSSLINALVQQKGLARTSNTPGRTQELNYFVPDGFSGSKEDFPPMALVDMPGYGFAQAPKNLVDAWTHLVFNYLRGRTTLKRVYILIDSRHGIKKNDEEVLDLLDKAAVSYQIILTKSDKIKSNMLENLMTTTQMSLLKRPAAYPELLTTSAEKALGLEELRTAILQAVVQ.

The region spanning 31–215 (GPPEIAFAGR…RTAILQAVVQ (185 aa)) is the EngB-type G domain. GTP-binding positions include 39–46 (GRSNVGKS), 66–70 (GRTQE), 93–96 (DMPG), 160–163 (TKSD), and 194–196 (TSA). Mg(2+) is bound by residues Ser46 and Thr68.

This sequence belongs to the TRAFAC class TrmE-Era-EngA-EngB-Septin-like GTPase superfamily. EngB GTPase family. Mg(2+) is required as a cofactor.

Necessary for normal cell division and for the maintenance of normal septation. This Bartonella bacilliformis (strain ATCC 35685 / KC583 / Herrer 020/F12,63) protein is Probable GTP-binding protein EngB.